The primary structure comprises 60 residues: Large ribosomal subunit protein bL32 (60 aa).

It belongs to the bacterial ribosomal protein bL32 family.

This Oenococcus oeni (strain ATCC BAA-331 / PSU-1) protein is Large ribosomal subunit protein bL32.